We begin with the raw amino-acid sequence, 209 residues long: Large ribosomal subunit protein uL3 (209 aa).

Residues 119–145 (AIKRHGQSRGPMSHGSHFHRAPGSVGM) are disordered.

This sequence belongs to the universal ribosomal protein uL3 family. As to quaternary structure, part of the 50S ribosomal subunit. Forms a cluster with proteins L14 and L19.

One of the primary rRNA binding proteins, it binds directly near the 3'-end of the 23S rRNA, where it nucleates assembly of the 50S subunit. The sequence is that of Large ribosomal subunit protein uL3 from Staphylococcus aureus (strain COL).